The following is a 353-amino-acid chain: Uroporphyrinogen decarboxylase (353 aa).

Substrate contacts are provided by residues 30-34 (RQAGR), Asp-79, Tyr-154, Ser-209, and His-332.

It belongs to the uroporphyrinogen decarboxylase family. As to quaternary structure, homodimer.

It is found in the cytoplasm. The enzyme catalyses uroporphyrinogen III + 4 H(+) = coproporphyrinogen III + 4 CO2. It functions in the pathway porphyrin-containing compound metabolism; protoporphyrin-IX biosynthesis; coproporphyrinogen-III from 5-aminolevulinate: step 4/4. Catalyzes the decarboxylation of four acetate groups of uroporphyrinogen-III to yield coproporphyrinogen-III. This is Uroporphyrinogen decarboxylase from Mycolicibacterium smegmatis (strain ATCC 700084 / mc(2)155) (Mycobacterium smegmatis).